Reading from the N-terminus, the 82-residue chain is UPF0298 protein SMU_1670c (82 aa).

The protein belongs to the UPF0298 family.

The protein resides in the cytoplasm. This chain is UPF0298 protein SMU_1670c, found in Streptococcus mutans serotype c (strain ATCC 700610 / UA159).